The primary structure comprises 1938 residues: Histone-lysine N-methyltransferase SETD1B (1938 aa).

Residues 1-20 are compositionally biased toward basic and acidic residues; that stretch reads MSFKEAKPGERGKNPEDHGR. The segment at 1 to 44 is disordered; sequence MSFKEAKPGERGKNPEDHGRKQAASWMNGMEAANQPSTSAEKKS. One can recognise an RRM domain in the interval 111–199; it reads DEFYVGPVPP…NIIHAELDTK (89 aa). 11 disordered regions span residues 226–357, 369–484, 496–630, 652–688, 916–1125, 1147–1174, 1187–1206, 1327–1373, 1413–1468, 1496–1528, and 1744–1772; these read LDAS…ENTF, FPRT…TRIA, LISS…EVTP, GFPPLPPPPPPQSGFPMPPPLPPPPPPTHPSVTVPPP, KEPP…SSPV, HQTAQDTSHLRKKDLDVPLVESKEHKQD, MQQNVFKEHEKAPSPMNEEE, KTLS…GNSL, FPES…VPHM, ECEFTKGQLPSTDESAPSPPFPPTDKRKGPKKP, and DEPPIDTQGKSIPAQPQASTRAGSERRSE. 4 stretches are compositionally biased toward polar residues: residues 254 to 290, 298 to 312, 375 to 407, and 446 to 457; these read VTPNSSTPFSHDTAYSSSRQGTPNSYSQFTPQSQGTP, PFSQDSSYSSRQTTP, LSHSSGNNKSAFSPYQGSTVFPQTDDNQYPQTS, and DSTTEQKASFAQ. Positions 512–531 are enriched in low complexity; that stretch reads SPISSSSSQLSPIPPYSSSS. Composition is skewed to polar residues over residues 532–546 and 569–585; these read HYQDVTPSSRPSSTG and SLCQNSRSASPIDQINQ. The segment covering 588-599 has biased composition (basic and acidic residues); that stretch reads RKMETLDNKELV. Residues 619–628 are compositionally biased toward acidic residues; that stretch reads EDMEISDDEV. Composition is skewed to acidic residues over residues 976–990 and 1054–1114; these read SEGEEEVESEGDDGE and DSSD…EDFF. A compositionally biased stretch (basic and acidic residues) spans 1159–1174; the sequence is KDLDVPLVESKEHKQD. Positions 1329–1343 are enriched in basic and acidic residues; the sequence is LSEEELPRTPGRDIL. Polar residues-rich tracts occupy residues 1349-1358 and 1441-1453; these read LGKSQSTETI and EPTSASLTMNSVP. Over residues 1454–1464 the composition is skewed to pro residues; sequence SPIPFASPPRG. Positions 1751-1765 are enriched in polar residues; it reads QGKSIPAQPQASTRA. The short motif at 1770 to 1775 is the RxxxRR motif element; that stretch reads RSEQRR. An SET domain is found at 1799-1916; that stretch reads KKIRFCKSHI…VNEEITYDYK (118 aa). Position 1915 (Tyr1915) interacts with S-adenosyl-L-methionine. A Post-SET domain is found at 1922-1938; that stretch reads VKIPCLCGAENCRGTLN.

This sequence belongs to the class V-like SAM-binding methyltransferase superfamily. Component of the SET1B/COMPASS complex.

Its subcellular location is the nucleus speckle. It localises to the chromosome. It carries out the reaction L-lysyl(4)-[histone H3] + 3 S-adenosyl-L-methionine = N(6),N(6),N(6)-trimethyl-L-lysyl(4)-[histone H3] + 3 S-adenosyl-L-homocysteine + 3 H(+). Histone methyltransferase that specifically methylates 'Lys-4' of histone H3, when part of the SET1 histone methyltransferase (HMT) complex, but not if the neighboring 'Lys-9' residue is already methylated. H3 'Lys-4' methylation represents a specific tag for epigenetic transcriptional activation. This Xenopus laevis (African clawed frog) protein is Histone-lysine N-methyltransferase SETD1B (setd1b).